The sequence spans 214 residues: Pyridoxine/pyridoxamine 5'-phosphate oxidase (214 aa).

Substrate-binding positions include 8–11 (RTNY) and Lys66. Residues 61 to 66 (RIVLIK), 76 to 77 (FT), Arg82, Lys83, and Gln105 each bind FMN. Tyr123, Arg127, and Ser131 together coordinate substrate. FMN-binding positions include 140–141 (QS) and Trp184. Residue 190-192 (RLH) participates in substrate binding. FMN is bound at residue Arg194.

It belongs to the pyridoxamine 5'-phosphate oxidase family. In terms of assembly, homodimer. FMN serves as cofactor.

It carries out the reaction pyridoxamine 5'-phosphate + O2 + H2O = pyridoxal 5'-phosphate + H2O2 + NH4(+). The enzyme catalyses pyridoxine 5'-phosphate + O2 = pyridoxal 5'-phosphate + H2O2. The protein operates within cofactor metabolism; pyridoxal 5'-phosphate salvage; pyridoxal 5'-phosphate from pyridoxamine 5'-phosphate: step 1/1. It participates in cofactor metabolism; pyridoxal 5'-phosphate salvage; pyridoxal 5'-phosphate from pyridoxine 5'-phosphate: step 1/1. Catalyzes the oxidation of either pyridoxine 5'-phosphate (PNP) or pyridoxamine 5'-phosphate (PMP) into pyridoxal 5'-phosphate (PLP). The polypeptide is Pyridoxine/pyridoxamine 5'-phosphate oxidase (Burkholderia mallei (strain NCTC 10247)).